Here is a 440-residue protein sequence, read N- to C-terminus: Chromosome partition protein MukF (440 aa).

The tract at residues 208-236 (LSETSGTLRELQDTLEAAGDKLQANLLRI) is leucine-zipper.

It belongs to the MukF family. Interacts, and probably forms a ternary complex, with MukE and MukB via its C-terminal region. The complex formation is stimulated by calcium or magnesium. It is required for an interaction between MukE and MukB.

Its subcellular location is the cytoplasm. It is found in the nucleoid. In terms of biological role, involved in chromosome condensation, segregation and cell cycle progression. May participate in facilitating chromosome segregation by condensation DNA from both sides of a centrally located replisome during cell division. Not required for mini-F plasmid partitioning. Probably acts via its interaction with MukB and MukE. Overexpression results in anucleate cells. It has a calcium binding activity. The protein is Chromosome partition protein MukF of Shigella boydii serotype 4 (strain Sb227).